The following is a 510-amino-acid chain: Ectonucleoside triphosphate diphosphohydrolase 1 (510 aa).

Over 1–16 the chain is Cytoplasmic; that stretch reads MEDRRESELKTFCSKN. A helical membrane pass occupies residues 17–37; it reads ILVILGFSSIIAVIALLALGL. Topologically, residues 38–477 are extracellular; the sequence is TQNKPLPENV…SSTRLSHSTY (440 aa). Asparagine 73 carries an N-linked (GlcNAc...) asparagine glycan. Residues cysteine 84 and cysteine 108 are joined by a disulfide bond. Glutamate 174 functions as the Proton acceptor in the catalytic mechanism. Asparagine 245, asparagine 274, asparagine 291, and asparagine 333 each carry an N-linked (GlcNAc...) asparagine glycan. Cystine bridges form between cysteine 255–cysteine 300 and cysteine 281–cysteine 324. Cysteine 337 and cysteine 342 are oxidised to a cystine. Residue asparagine 370 is glycosylated (N-linked (GlcNAc...) asparagine). A disulfide bridge links cysteine 390 with cysteine 413. Asparagine 457 is a glycosylation site (N-linked (GlcNAc...) asparagine). A helical membrane pass occupies residues 478–498; it reads VFLMVLFSLILVIVVIIGLFV. The Cytoplasmic segment spans residues 499-510; the sequence is CHRPSYFWKDMV.

This sequence belongs to the GDA1/CD39 NTPase family. Homodimer; disulfide-linked. Ca(2+) serves as cofactor. The cofactor is Mg(2+). In terms of processing, N-glycosylated. Cleaved into two polypeptides that seem to stay together by non-covalent interactions. Post-translationally, the N-terminus is blocked. In terms of processing, palmitoylated on Cys-13; which is required for caveola targeting. As to expression, highest expression found in vascular endothelium, smooth muscle, spleen and lung (at protein level). High expression also found in stomach, duodenum, kidney, lymph node and aorta (at protein level).

It localises to the membrane. Its subcellular location is the caveola. It catalyses the reaction a ribonucleoside 5'-triphosphate + 2 H2O = a ribonucleoside 5'-phosphate + 2 phosphate + 2 H(+). The enzyme catalyses a ribonucleoside 5'-triphosphate + H2O = a ribonucleoside 5'-diphosphate + phosphate + H(+). The catalysed reaction is a ribonucleoside 5'-diphosphate + H2O = a ribonucleoside 5'-phosphate + phosphate + H(+). It carries out the reaction ATP + 2 H2O = AMP + 2 phosphate + 2 H(+). It catalyses the reaction ATP + H2O = ADP + phosphate + H(+). The enzyme catalyses ADP + H2O = AMP + phosphate + H(+). The catalysed reaction is CTP + 2 H2O = CMP + 2 phosphate + 2 H(+). It carries out the reaction CTP + H2O = CDP + phosphate + H(+). It catalyses the reaction CDP + H2O = CMP + phosphate + H(+). The enzyme catalyses GTP + 2 H2O = GMP + 2 phosphate + 2 H(+). The catalysed reaction is GTP + H2O = GDP + phosphate + H(+). It carries out the reaction GDP + H2O = GMP + phosphate + H(+). It catalyses the reaction ITP + 2 H2O = IMP + 2 phosphate + 2 H(+). The enzyme catalyses ITP + H2O = IDP + phosphate + H(+). The catalysed reaction is IDP + H2O = IMP + phosphate + H(+). It carries out the reaction UTP + 2 H2O = UMP + 2 phosphate + 2 H(+). It catalyses the reaction UTP + H2O = UDP + phosphate + H(+). The enzyme catalyses UDP + H2O = UMP + phosphate + H(+). With respect to regulation, the ATP diphosphohydrolase activity is decreased by half by sodium azide. Its function is as follows. Catalyzes the hydrolysis of both di- and triphosphate nucleotides (NDPs and NTPs) and hydrolyze NTPs to nucleotide monophosphates (NMPs) in two distinct successive phosphate-releasing steps, with NDPs as intermediates and participates in the regulation of extracellular levels of nucleotides. By hydrolyzing proinflammatory ATP and platelet-activating ADP to AMP, it blocks platelet aggregation and supports blood flow. This is Ectonucleoside triphosphate diphosphohydrolase 1 from Sus scrofa (Pig).